Consider the following 126-residue polypeptide: Small ribosomal subunit protein uS13 (126 aa).

Residues 94–126 are disordered; sequence RGLPVHGQRTSTNARTRKGPRRAIAGKKKPGKK. Basic residues predominate over residues 108-126; it reads RTRKGPRRAIAGKKKPGKK.

It belongs to the universal ribosomal protein uS13 family. As to quaternary structure, part of the 30S ribosomal subunit. Forms a loose heterodimer with protein S19. Forms two bridges to the 50S subunit in the 70S ribosome.

Its function is as follows. Located at the top of the head of the 30S subunit, it contacts several helices of the 16S rRNA. In the 70S ribosome it contacts the 23S rRNA (bridge B1a) and protein L5 of the 50S subunit (bridge B1b), connecting the 2 subunits; these bridges are implicated in subunit movement. Contacts the tRNAs in the A and P-sites. In Streptomyces griseus subsp. griseus (strain JCM 4626 / CBS 651.72 / NBRC 13350 / KCC S-0626 / ISP 5235), this protein is Small ribosomal subunit protein uS13.